Reading from the N-terminus, the 451-residue chain is Metalloprotease MJ0996 (451 aa).

It belongs to the peptidase U62 family.

Probable metalloprotease. The polypeptide is Metalloprotease MJ0996 (Methanocaldococcus jannaschii (strain ATCC 43067 / DSM 2661 / JAL-1 / JCM 10045 / NBRC 100440) (Methanococcus jannaschii)).